The primary structure comprises 315 residues: GTP cyclohydrolase MptA (315 aa).

It belongs to the GTP cyclohydrolase IV family. As to quaternary structure, homodimer. Fe(2+) serves as cofactor.

It catalyses the reaction GTP + H2O = 7,8-dihydroneopterin 2',3'-cyclic phosphate + formate + diphosphate + H(+). It functions in the pathway cofactor biosynthesis; 5,6,7,8-tetrahydromethanopterin biosynthesis. Functionally, converts GTP to 7,8-dihydro-D-neopterin 2',3'-cyclic phosphate, the first intermediate in the biosynthesis of coenzyme methanopterin. In Methanococcus maripaludis (strain DSM 14266 / JCM 13030 / NBRC 101832 / S2 / LL), this protein is GTP cyclohydrolase MptA.